Reading from the N-terminus, the 260-residue chain is Transcription repressor OFP13 (260 aa).

Residues 150-211 (VAMESEDPYG…VSAFVDLLSG (62 aa)) enclose the OVATE domain.

In terms of tissue distribution, expressed in roots, rosette and cauline leaves, shoots, stems, flower buds and siliques.

It is found in the nucleus. In terms of biological role, transcriptional repressor that regulates multiple aspects of plant growth and development through the regulation of BEL1-LIKE (BLH) and KNOX TALE (KNAT) homeodomain transcription factors. In Arabidopsis thaliana (Mouse-ear cress), this protein is Transcription repressor OFP13 (OFP13).